Reading from the N-terminus, the 258-residue chain is Adenosylcobinamide-GDP ribazoletransferase (258 aa).

The next 6 helical transmembrane spans lie at 41–61 (FFPL…WLAS), 65–85 (PAPG…TGAF), 115–135 (IGAF…QLLM), 136–156 (AMAA…HAAS), 197–217 (LPLL…LLAA), and 236–256 (CLGL…LAWT).

The protein belongs to the CobS family. The cofactor is Mg(2+).

Its subcellular location is the cell inner membrane. The catalysed reaction is alpha-ribazole + adenosylcob(III)inamide-GDP = adenosylcob(III)alamin + GMP + H(+). The enzyme catalyses alpha-ribazole 5'-phosphate + adenosylcob(III)inamide-GDP = adenosylcob(III)alamin 5'-phosphate + GMP + H(+). It participates in cofactor biosynthesis; adenosylcobalamin biosynthesis; adenosylcobalamin from cob(II)yrinate a,c-diamide: step 7/7. Its function is as follows. Joins adenosylcobinamide-GDP and alpha-ribazole to generate adenosylcobalamin (Ado-cobalamin). Also synthesizes adenosylcobalamin 5'-phosphate from adenosylcobinamide-GDP and alpha-ribazole 5'-phosphate. The chain is Adenosylcobinamide-GDP ribazoletransferase from Ralstonia nicotianae (strain ATCC BAA-1114 / GMI1000) (Ralstonia solanacearum).